We begin with the raw amino-acid sequence, 538 residues long: Cytochrome P450 734A4 (538 aa).

Residues 5–27 (VAVAAAVLLLLHVAARVADAVWW) traverse the membrane as a helical segment. Heme is bound at residue Cys480.

This sequence belongs to the cytochrome P450 family. It depends on heme as a cofactor. Expressed in roots, shoot apex, leaf sheaths, leaf blades, internodes and panicles.

Its subcellular location is the membrane. Cytochrome P450 involved in brassinosteroids (BRs) inactivation and regulation of BRs homeostasis. Is a multifunctional and multisubstrate enzyme that controls the endogenous bioactive BR content both by direct inactivation of castasterone (CS) and by decreasing the levels of BR precursors. Catalyzes the oxidation of carbon 22 hydroxylated BR intermediates to produce C26 oxidized metabolites. This is Cytochrome P450 734A4 (CYP734A4) from Oryza sativa subsp. japonica (Rice).